A 591-amino-acid chain; its full sequence is Aspartate--tRNA(Asp/Asn) ligase (591 aa).

Glu176 contributes to the L-aspartate binding site. Residues 200 to 203 (QLFK) form an aspartate region. Residue Arg222 coordinates L-aspartate. Residues 222–224 (RDE) and Gln231 contribute to the ATP site. His450 contacts L-aspartate. Glu484 lines the ATP pocket. Arg491 is an L-aspartate binding site. 536–539 (GLDR) provides a ligand contact to ATP.

It belongs to the class-II aminoacyl-tRNA synthetase family. Type 1 subfamily. Homodimer.

The protein localises to the cytoplasm. It catalyses the reaction tRNA(Asx) + L-aspartate + ATP = L-aspartyl-tRNA(Asx) + AMP + diphosphate. Functionally, aspartyl-tRNA synthetase with relaxed tRNA specificity since it is able to aspartylate not only its cognate tRNA(Asp) but also tRNA(Asn). Reaction proceeds in two steps: L-aspartate is first activated by ATP to form Asp-AMP and then transferred to the acceptor end of tRNA(Asp/Asn). In Bacillus cereus (strain ATCC 10987 / NRS 248), this protein is Aspartate--tRNA(Asp/Asn) ligase.